Here is a 311-residue protein sequence, read N- to C-terminus: Pyrimidine-specific ribonucleoside hydrolase RihA (311 aa).

H240 is an active-site residue.

It belongs to the IUNH family. RihA subfamily.

Hydrolyzes cytidine or uridine to ribose and cytosine or uracil, respectively. This Salmonella enteritidis PT4 (strain P125109) protein is Pyrimidine-specific ribonucleoside hydrolase RihA.